We begin with the raw amino-acid sequence, 252 residues long: Trans-aconitate 2-methyltransferase (252 aa).

This sequence belongs to the methyltransferase superfamily. Tam family.

Its subcellular location is the cytoplasm. It carries out the reaction trans-aconitate + S-adenosyl-L-methionine = (E)-3-(methoxycarbonyl)pent-2-enedioate + S-adenosyl-L-homocysteine. Functionally, catalyzes the S-adenosylmethionine monomethyl esterification of trans-aconitate. The sequence is that of Trans-aconitate 2-methyltransferase from Escherichia coli O6:K15:H31 (strain 536 / UPEC).